Here is a 777-residue protein sequence, read N- to C-terminus: Shutoff protein (777 aa).

Disordered stretches follow at residues 1–55 and 261–283; these read MEED…SVPV and PLDS…DDDL. The segment covering 9–20 has biased composition (polar residues); the sequence is QPDSETLTSPTS. The interval 250–314 is binding to host EIF4G; it reads VMDHLLIKRV…VILVTVELEC (65 aa). The 119-residue stretch at 317–435 folds into the RRM domain; it reads RFFANPQTLR…ELWTAFSERT (119 aa). A phosphotyrosine; by host mark is found at Y334 and Y649. The interval 652-777 is disordered; it reads PQTGEELNTP…AAARLVESQP (126 aa). Residues 656–665 show a composition bias toward polar residues; sequence EELNTPSPSA. Over residues 728-738 the composition is skewed to gly residues; that stretch reads GAGGQTPQGRG. Over residues 753–763 the composition is skewed to basic and acidic residues; sequence TRSEPASDGES.

This sequence belongs to the adenoviridae shutoff protein family. As to quaternary structure, monomer. Interacts with hexon protein; this interaction allows chaperoning and trimerization of hexon proteins. Interacts (via N-terminus) with host initiation factor EIF4G (via C-terminus). Interacts (via RRM domain) with viral mRNAs that contain the tripartite leader; this interaction allows ribosome shunting and expression of viral late mRNAs. In terms of processing, might be cleaved by the viral protease. Post-translationally, phosphorylated. Tyrosine phosphorylation enhances preferential binding to tripartite leader mRNAs and allows ribosome shunting. Methylated. Asymmetric dimethylation by host PRMT1 of the Arg/Gly-rich region may regulate shutoff protein binding to hexon and promote the capsid assembly in the nucleus.

It localises to the host cytoplasm. In terms of biological role, protein that inhibits host translation while promoting late viral translation by ribosome shunting. Blocks host cap-dependent translation by binding to eIF4G, displacing MKNK1 from cap initiation complexes and preventing EIF4E phosphorylation. Binds to the tripartite leader sequence of viral late mRNAs and recruits host eIF4G, PABPC1/poly-A binding protein and 40S ribosomes subunits on viral mRNAs, allowing ribosome shunting and efficient translation of late viral mRNAs even though conventional translation via ribosome scanning from the cap has been shut off in the host cell. During assembly, acts as a chaperone protein that helps hexon proteins assembly into trimers. This is Shutoff protein from Homo sapiens (Human).